Reading from the N-terminus, the 412-residue chain is tRNA N6-adenosine threonylcarbamoyltransferase, mitochondrial (412 aa).

The N-terminal 78 residues, 1–78 (MLCLVYNSIL…IICLNTHRTI (78 aa)), are a transit peptide targeting the mitochondrion. A divalent metal cation is bound by residues His-157 and His-161. Substrate contacts are provided by residues 179-183 (LVSGG), Asp-212, Ala-228, Glu-232, 328-329 (RN), and Ser-363. Residue Asp-364 participates in a divalent metal cation binding.

Belongs to the KAE1 / TsaD family. In terms of assembly, homodimer. Requires a divalent metal cation as cofactor.

The protein localises to the mitochondrion. The catalysed reaction is L-threonylcarbamoyladenylate + adenosine(37) in tRNA = N(6)-L-threonylcarbamoyladenosine(37) in tRNA + AMP + H(+). In terms of biological role, required for the formation of a threonylcarbamoyl group on adenosine at position 37 (t(6)A37) in mitochondrial tRNAs that read codons beginning with adenine. Probably involved in the transfer of the threonylcarbamoyl moiety of threonylcarbamoyl-AMP (TC-AMP) to the N6 group of A37. Involved in mitochondrial genome maintenance. The polypeptide is tRNA N6-adenosine threonylcarbamoyltransferase, mitochondrial (pgp1) (Schizosaccharomyces pombe (strain 972 / ATCC 24843) (Fission yeast)).